We begin with the raw amino-acid sequence, 218 residues long: Telomere repeats-binding bouquet formation protein 2 (218 aa).

The tract at residues 117-143 (HDRMASSDKENIRPTPEHKQELSKSAE) is disordered.

This sequence belongs to the TERB2 family. In terms of assembly, component of the MAJIN-TERB1-TERB2 complex, composed of MAJIN, TERB1 and TERB2. Specifically expressed in germline tissues.

The protein localises to the chromosome. It localises to the telomere. The protein resides in the nucleus inner membrane. In terms of biological role, meiosis-specific telomere-associated protein involved in meiotic telomere attachment to the nucleus inner membrane, a crucial step for homologous pairing and synapsis. Component of the MAJIN-TERB1-TERB2 complex, which promotes telomere cap exchange by mediating attachment of telomeric DNA to the inner nuclear membrane and replacement of the protective cap of telomeric chromosomes: in early meiosis, the MAJIN-TERB1-TERB2 complex associates with telomeric DNA and the shelterin/telosome complex. During prophase, the complex matures and promotes release of the shelterin/telosome complex from telomeric DNA. The polypeptide is Telomere repeats-binding bouquet formation protein 2 (Mus musculus (Mouse)).